Here is a 572-residue protein sequence, read N- to C-terminus: 2-succinyl-5-enolpyruvyl-6-hydroxy-3-cyclohexene-1-carboxylate synthase (572 aa).

The protein belongs to the TPP enzyme family. MenD subfamily. As to quaternary structure, homodimer. Requires Mg(2+) as cofactor. Mn(2+) serves as cofactor. Thiamine diphosphate is required as a cofactor.

It catalyses the reaction isochorismate + 2-oxoglutarate + H(+) = 5-enolpyruvoyl-6-hydroxy-2-succinyl-cyclohex-3-ene-1-carboxylate + CO2. The protein operates within quinol/quinone metabolism; 1,4-dihydroxy-2-naphthoate biosynthesis; 1,4-dihydroxy-2-naphthoate from chorismate: step 2/7. It participates in quinol/quinone metabolism; menaquinone biosynthesis. Its function is as follows. Catalyzes the thiamine diphosphate-dependent decarboxylation of 2-oxoglutarate and the subsequent addition of the resulting succinic semialdehyde-thiamine pyrophosphate anion to isochorismate to yield 2-succinyl-5-enolpyruvyl-6-hydroxy-3-cyclohexene-1-carboxylate (SEPHCHC). The sequence is that of 2-succinyl-5-enolpyruvyl-6-hydroxy-3-cyclohexene-1-carboxylate synthase from Shewanella amazonensis (strain ATCC BAA-1098 / SB2B).